The chain runs to 177 residues: Peptide methionine sulfoxide reductase MsrA (177 aa).

The active site involves Cys15.

Belongs to the MsrA Met sulfoxide reductase family.

The catalysed reaction is L-methionyl-[protein] + [thioredoxin]-disulfide + H2O = L-methionyl-(S)-S-oxide-[protein] + [thioredoxin]-dithiol. It carries out the reaction [thioredoxin]-disulfide + L-methionine + H2O = L-methionine (S)-S-oxide + [thioredoxin]-dithiol. In terms of biological role, has an important function as a repair enzyme for proteins that have been inactivated by oxidation. Catalyzes the reversible oxidation-reduction of methionine sulfoxide in proteins to methionine. This chain is Peptide methionine sulfoxide reductase MsrA, found in Listeria monocytogenes serotype 4a (strain HCC23).